A 452-amino-acid chain; its full sequence is Serine incorporator 2 (452 aa).

The next 11 helical transmembrane spans lie at 5 to 25 (LGAC…PCIL), 41 to 61 (FFTV…SPGV), 96 to 116 (AVYR…LLMV), 131 to 151 (GFWF…FYIP), 158 to 178 (IWFY…LLLL), 205 to 225 (LFFF…LLFV), 236 to 256 (GKVF…VAIL), 266 to 286 (SGLL…WLAL), 319 to 339 (WDAP…FISL), 387 to 407 (FFHL…TNWY), and 426 to 446 (ICAS…PLLL).

This sequence belongs to the TDE1 family.

It localises to the cell membrane. The catalysed reaction is a 1,2-diacyl-sn-glycero-3-phospho-L-serine(in) = a 1,2-diacyl-sn-glycero-3-phospho-L-serine(out). It catalyses the reaction a 1,2-diacyl-sn-glycero-3-phosphocholine(in) = a 1,2-diacyl-sn-glycero-3-phosphocholine(out). The enzyme catalyses a 1,2-diacyl-sn-glycero-3-phosphoethanolamine(in) = a 1,2-diacyl-sn-glycero-3-phosphoethanolamine(out). Non-ATP-dependent, non-specific lipid transporter for phosphatidylserine, phosphatidylcholine, and phosphatidylethanolamine. Functions as a scramblase that flips lipids in both directions across the membrane. In contrast to SERINC3 and SERINC5, has no effect on gammaretrovirus particles infectivity. In Bos taurus (Bovine), this protein is Serine incorporator 2 (SERINC2).